Reading from the N-terminus, the 207-residue chain is Large ribosomal subunit protein uL4 (207 aa).

A disordered region spans residues 53–76 (NRSAVRGGGRKPWRQKGTGRARQG). Basic residues predominate over residues 60 to 71 (GGRKPWRQKGTG).

It belongs to the universal ribosomal protein uL4 family. Part of the 50S ribosomal subunit.

One of the primary rRNA binding proteins, this protein initially binds near the 5'-end of the 23S rRNA. It is important during the early stages of 50S assembly. It makes multiple contacts with different domains of the 23S rRNA in the assembled 50S subunit and ribosome. Functionally, forms part of the polypeptide exit tunnel. The sequence is that of Large ribosomal subunit protein uL4 from Staphylococcus saprophyticus subsp. saprophyticus (strain ATCC 15305 / DSM 20229 / NCIMB 8711 / NCTC 7292 / S-41).